The chain runs to 613 residues: Transcription factor MTB1 (613 aa).

The tract at residues 48-130 is JAZ-interaction domain; sequence LQNKLSDLVE…RVLQKLHMLF (83 aa). Disordered regions lie at residues 256–285 and 391–441; these read EKNE…FGHD and AHNV…AERQ. A compositionally biased stretch (polar residues) spans 260–270; the sequence is GNNPRLSNSGA. 2 stretches are compositionally biased toward basic and acidic residues: residues 394-417 and 427-441; these read VESE…DEKR and NGRE…AERQ. The interval 430–443 is basic motif; degenerate; the sequence is EEPLNHVEAERQRR. Positions 430–479 constitute a bHLH domain; that stretch reads EEPLNHVEAERQRREKLNQRFYALRAVVPNISKMDKASLLGDAIAYITEL. Residues 444 to 479 are helix-loop-helix motif; it reads EKLNQRFYALRAVVPNISKMDKASLLGDAIAYITEL. The interval 490–513 is disordered; the sequence is RELRLGSTSRDAITSEDSPSSEIQ. Residues 495–512 are compositionally biased toward polar residues; the sequence is GSTSRDAITSEDSPSSEI.

Interacts with MYC2 (via N-terminus). MTB1 competes with MED25 for binding to MYC2. Interacts (via N-terminus) with JAZ7.

It is found in the nucleus. Transcription factor that negatively regulates jasmonate (JA) signaling. Negatively regulates JA-dependent response to wounding, JA-induced expression of defense genes, JA-dependent responses against herbivorous insects, and JA-dependent resistance against Botrytis cinerea infection. Plays a positive role in resistance against the bacterial pathogen Pseudomonas syringae pv tomato DC3000. The sequence is that of Transcription factor MTB1 from Solanum lycopersicum (Tomato).